The chain runs to 263 residues: uncharacterized protein (263 aa).

ATP is bound at residue 31–38 (GPTGSGKT).

It belongs to the CbbQ/NirQ/NorQ/GpvN family.

This is an uncharacterized protein from Staphylococcus aureus (strain bovine RF122 / ET3-1).